The sequence spans 208 residues: Cytochrome c biogenesis ATP-binding export protein CcmA (208 aa).

In terms of domain architecture, ABC transporter spans 3 to 206; the sequence is LSGKDLAAHR…LEKFVPSQER (204 aa). 35–42 lines the ATP pocket; that stretch reads GPNGIGKS.

This sequence belongs to the ABC transporter superfamily. CcmA exporter (TC 3.A.1.107) family. The complex is composed of two ATP-binding proteins (CcmA) and two transmembrane proteins (CcmB).

The protein localises to the cell inner membrane. It carries out the reaction heme b(in) + ATP + H2O = heme b(out) + ADP + phosphate + H(+). Its function is as follows. Part of the ABC transporter complex CcmAB involved in the biogenesis of c-type cytochromes; once thought to export heme, this seems not to be the case, but its exact role is uncertain. Responsible for energy coupling to the transport system. The chain is Cytochrome c biogenesis ATP-binding export protein CcmA from Bartonella quintana (strain Toulouse) (Rochalimaea quintana).